A 206-amino-acid polypeptide reads, in one-letter code: Peptidyl-tRNA hydrolase (206 aa).

Tyr-14 provides a ligand contact to tRNA. His-19 functions as the Proton acceptor in the catalytic mechanism. 2 residues coordinate tRNA: Phe-64 and Asn-66. The segment at 185–206 is disordered; that stretch reads VNGEAPKKSKDQAKEPANEQPR. Residues 189–206 are compositionally biased toward basic and acidic residues; sequence APKKSKDQAKEPANEQPR.

The protein belongs to the PTH family. Monomer.

It is found in the cytoplasm. It carries out the reaction an N-acyl-L-alpha-aminoacyl-tRNA + H2O = an N-acyl-L-amino acid + a tRNA + H(+). Its function is as follows. Hydrolyzes ribosome-free peptidyl-tRNAs (with 1 or more amino acids incorporated), which drop off the ribosome during protein synthesis, or as a result of ribosome stalling. Functionally, catalyzes the release of premature peptidyl moieties from peptidyl-tRNA molecules trapped in stalled 50S ribosomal subunits, and thus maintains levels of free tRNAs and 50S ribosomes. The sequence is that of Peptidyl-tRNA hydrolase from Herpetosiphon aurantiacus (strain ATCC 23779 / DSM 785 / 114-95).